A 208-amino-acid polypeptide reads, in one-letter code: uncharacterized protein (208 aa).

Positions 1–16 (MTRVALLTTGRELSQA) are cleaved as a signal peptide. Disordered regions lie at residues 1 to 95 (MTRV…VRGQ) and 145 to 176 (RVTKVSSSGPNSTPLPAARIGPGTNNAPSAAD). The segment covering 16–25 (AAPPARARTP) has biased composition (low complexity). Basic and acidic residues predominate over residues 32-43 (RGERPDDGGHAP). The span at 44–54 (HRDRRVNQRRR) shows a compositional bias: basic residues. Basic and acidic residues predominate over residues 55-95 (QVGDRRAQRGVDEHPWRRPDERPNDHLPQRNSERPEGVRGQ). Composition is skewed to polar residues over residues 148 to 158 (KVSSSGPNSTP) and 167 to 176 (GTNNAPSAAD).

This is an uncharacterized protein from Mycobacterium tuberculosis (strain CDC 1551 / Oshkosh).